Here is a 150-residue protein sequence, read N- to C-terminus: Small ribosomal subunit protein bS6 (150 aa).

The interval 92 to 150 is disordered; sequence KGINKPAKPKKTFKKTFVARKFSRDDESKTHSTEEPRRANTKSTYKKSTSFSQDNKNKK. Basic residues predominate over residues 98 to 109; it reads AKPKKTFKKTFV. The span at 113–129 shows a compositional bias: basic and acidic residues; it reads FSRDDESKTHSTEEPRR. The span at 132-141 shows a compositional bias: low complexity; that stretch reads TKSTYKKSTS.

The protein belongs to the bacterial ribosomal protein bS6 family.

In terms of biological role, binds together with bS18 to 16S ribosomal RNA. This is Small ribosomal subunit protein bS6 from Mycoplasmopsis pulmonis (strain UAB CTIP) (Mycoplasma pulmonis).